The primary structure comprises 307 residues: 4-hydroxybenzoate octaprenyltransferase (307 aa).

The next 9 helical transmembrane spans lie at 19–39 (PVGI…AAMG), 48–68 (VTAG…AILM), 105–125 (AIAA…FLPI), 127–147 (VFYW…MKRY), 150–170 (LPQV…YVAI), 172–192 (GAAD…TVAY), 221–241 (VIII…VMWH), 243–263 (FVPT…AMMF), and 282–302 (FLAN…ACVW).

Belongs to the UbiA prenyltransferase family. It depends on Mg(2+) as a cofactor.

It is found in the cell inner membrane. It catalyses the reaction all-trans-octaprenyl diphosphate + 4-hydroxybenzoate = 4-hydroxy-3-(all-trans-octaprenyl)benzoate + diphosphate. Its pathway is cofactor biosynthesis; ubiquinone biosynthesis. Functionally, catalyzes the prenylation of para-hydroxybenzoate (PHB) with an all-trans polyprenyl group. Mediates the second step in the final reaction sequence of ubiquinone-8 (UQ-8) biosynthesis, which is the condensation of the polyisoprenoid side chain with PHB, generating the first membrane-bound Q intermediate 3-octaprenyl-4-hydroxybenzoate. The polypeptide is 4-hydroxybenzoate octaprenyltransferase (Psychrobacter arcticus (strain DSM 17307 / VKM B-2377 / 273-4)).